Reading from the N-terminus, the 71-residue chain is DNA gyrase inhibitor YacG (71 aa).

Zn(2+) is bound by residues C8, C11, C27, and C31. The segment at 48 to 71 (VVEDDDLPPDAPGGESGGASGRLN) is disordered. A compositionally biased stretch (gly residues) spans 61–71 (GESGGASGRLN).

Belongs to the DNA gyrase inhibitor YacG family. As to quaternary structure, interacts with GyrB. Zn(2+) serves as cofactor.

Functionally, inhibits all the catalytic activities of DNA gyrase by preventing its interaction with DNA. Acts by binding directly to the C-terminal domain of GyrB, which probably disrupts DNA binding by the gyrase. In Ralstonia nicotianae (strain ATCC BAA-1114 / GMI1000) (Ralstonia solanacearum), this protein is DNA gyrase inhibitor YacG.